The chain runs to 285 residues: Probable endonuclease 4 (285 aa).

Zn(2+) is bound by residues histidine 69, histidine 109, glutamate 145, aspartate 179, histidine 182, histidine 216, aspartate 229, histidine 231, and glutamate 261.

This sequence belongs to the AP endonuclease 2 family. Zn(2+) is required as a cofactor.

The enzyme catalyses Endonucleolytic cleavage to 5'-phosphooligonucleotide end-products.. Functionally, endonuclease IV plays a role in DNA repair. It cleaves phosphodiester bonds at apurinic or apyrimidinic (AP) sites, generating a 3'-hydroxyl group and a 5'-terminal sugar phosphate. This chain is Probable endonuclease 4, found in Shigella sonnei (strain Ss046).